Reading from the N-terminus, the 267-residue chain is MKKIRVFVSGAGGKMGREVVRTILDQEDMQLVGASDARQQGRDIGELLAMAPLGIEITGPLEVAHLKETRADIMVDFTNPQSVLKNAKCALAAGVVPVLGTTGLDEADISEIRDLVDQTKVGAFIAPNFAIGAILMMRFAQEAAKYFPHVEIIELHHDQKLDAPSGTALKTVEWISEVRKPLVQGHPNEYEKIKGSRGGDVDGIHIHSVRLPGFIAHQEVIFGGLGQALTIRHDALSRETYMPGIMLAVRKASQLSNLVIGLENFLE.

10–15 (GAGGKM) contacts NAD(+). Residue arginine 38 coordinates NADP(+). NAD(+) is bound by residues 100-102 (GTT) and 126-129 (APNF). Histidine 156 functions as the Proton donor/acceptor in the catalytic mechanism. Histidine 157 is a binding site for (S)-2,3,4,5-tetrahydrodipicolinate. The active-site Proton donor is lysine 160. (S)-2,3,4,5-tetrahydrodipicolinate is bound at residue 166-167 (GT).

The protein belongs to the DapB family.

The protein localises to the cytoplasm. It carries out the reaction (S)-2,3,4,5-tetrahydrodipicolinate + NAD(+) + H2O = (2S,4S)-4-hydroxy-2,3,4,5-tetrahydrodipicolinate + NADH + H(+). The enzyme catalyses (S)-2,3,4,5-tetrahydrodipicolinate + NADP(+) + H2O = (2S,4S)-4-hydroxy-2,3,4,5-tetrahydrodipicolinate + NADPH + H(+). Its pathway is amino-acid biosynthesis; L-lysine biosynthesis via DAP pathway; (S)-tetrahydrodipicolinate from L-aspartate: step 4/4. Catalyzes the conversion of 4-hydroxy-tetrahydrodipicolinate (HTPA) to tetrahydrodipicolinate. The chain is 4-hydroxy-tetrahydrodipicolinate reductase from Desulfitobacterium hafniense (strain DSM 10664 / DCB-2).